The chain runs to 392 residues: MENRIEMSQLRASKKDSKISYVLLMATKLYLESGQPVGSKLLEETYCSDLSSATIRNYFAQLETNGFLRKNHISGGRIPTDLAFRYYADHNAPFLEQEEILAIQQKLTELPEYSKNIVKDLQKASEVLSDILQLPVCFSSPRFESDSVINIQLVAIDDQRVVFVLSTEFGQVFTDVLWLPEQLPENSLKRIEGFLQNYLRKQPSDSLLSQKEEDLGMVLYNEVVVRYLTRYCHFSEEDLYQTGLSRLLKYETFKDPETLAQGLAFFENRKHMCQLLNTYLHKETPTAFIGRELTDIVGNTDPSCAVITIPYYMDRTPLGAFGVLGPMNLPYQQVFGTLSLFTERLKVILTQSFYKFKLSFRRPCPTDPRCSQRPAELTRSSSIKLLPAKELS.

It belongs to the HrcA family.

Negative regulator of class I heat shock genes (grpE-dnaK-dnaJ and groELS operons). Prevents heat-shock induction of these operons. This chain is Heat-inducible transcription repressor HrcA, found in Chlamydia trachomatis serovar L2 (strain ATCC VR-902B / DSM 19102 / 434/Bu).